The sequence spans 395 residues: Imidazolonepropionase (395 aa).

Fe(3+) is bound by residues His-63 and His-65. Residues His-63 and His-65 each contribute to the Zn(2+) site. Residues Arg-72, Tyr-135, and His-168 each coordinate 4-imidazolone-5-propanoate. Tyr-135 contacts N-formimidoyl-L-glutamate. Residue His-233 coordinates Fe(3+). His-233 contributes to the Zn(2+) binding site. Gln-236 contributes to the 4-imidazolone-5-propanoate binding site. Asp-308 contacts Fe(3+). Position 308 (Asp-308) interacts with Zn(2+). N-formimidoyl-L-glutamate-binding residues include Asn-310 and Gly-312. Residue Thr-313 coordinates 4-imidazolone-5-propanoate.

Belongs to the metallo-dependent hydrolases superfamily. HutI family. The cofactor is Zn(2+). Fe(3+) serves as cofactor.

The protein localises to the cytoplasm. The enzyme catalyses 4-imidazolone-5-propanoate + H2O = N-formimidoyl-L-glutamate. It participates in amino-acid degradation; L-histidine degradation into L-glutamate; N-formimidoyl-L-glutamate from L-histidine: step 3/3. In terms of biological role, catalyzes the hydrolytic cleavage of the carbon-nitrogen bond in imidazolone-5-propanoate to yield N-formimidoyl-L-glutamate. It is the third step in the universal histidine degradation pathway. The chain is Imidazolonepropionase from Cereibacter sphaeroides (strain ATCC 17023 / DSM 158 / JCM 6121 / CCUG 31486 / LMG 2827 / NBRC 12203 / NCIMB 8253 / ATH 2.4.1.) (Rhodobacter sphaeroides).